The chain runs to 204 residues: N-alpha-acetyltransferase 40 (204 aa).

Positions 39–202 (EIYHHLEKGL…YYILYTKSRK (164 aa)) constitute an N-acetyltransferase domain. Substrate contacts are provided by residues tyrosine 64, 107-109 (TVE), and tyrosine 118. Residues 120-122 (IQL) and 128-133 (GRNVGK) each bind acetyl-CoA. Substrate is bound at residue threonine 154. Asparagine 159 is a binding site for acetyl-CoA. Serine 176 contacts substrate.

Belongs to the acetyltransferase family. NAA40 subfamily.

Its subcellular location is the cytoplasm. The protein localises to the nucleus. It carries out the reaction N-terminal L-seryl-[histone H4] + acetyl-CoA = N-terminal N(alpha)-acetyl-L-seryl-[histone H4] + CoA + H(+). The catalysed reaction is N-terminal L-seryl-[histone H2A] + acetyl-CoA = N-terminal N(alpha)-acetyl-L-seryl-[histone H2A] + CoA + H(+). Its function is as follows. N-alpha-acetyltransferase that specifically mediates the acetylation of the N-terminal residues of histones H4 and H2A. The protein is N-alpha-acetyltransferase 40 of Schizosaccharomyces pombe (strain 972 / ATCC 24843) (Fission yeast).